The primary structure comprises 397 residues: T-box transcription factor TBX19 (397 aa).

Positions 48–216 (LWQRFREVTN…YNPFAKAFLD (169 aa)) form a DNA-binding region, T-box. Residues 220-248 (RNHPKDAPEAASEGQHMTYSHSPQAPHGC) form a disordered region.

It localises to the nucleus. Functionally, may be involved in the initial formation of the chordamesoderm. This chain is T-box transcription factor TBX19, found in Gallus gallus (Chicken).